The sequence spans 430 residues: Adenylosuccinate synthetase (430 aa).

Residues 12-18 (GDEGKGK) and 40-42 (GHT) contribute to the GTP site. The active-site Proton acceptor is the Asp-13. Mg(2+)-binding residues include Asp-13 and Gly-40. Residues 13–16 (DEGK), 38–41 (NAGH), Thr-130, Arg-144, Gln-224, Thr-239, and Arg-303 each bind IMP. His-41 (proton donor) is an active-site residue. Residue 299 to 305 (TVTGRKR) coordinates substrate. Residues Arg-305, 331–333 (KLD), and 413–415 (STS) each bind GTP.

It belongs to the adenylosuccinate synthetase family. In terms of assembly, homodimer. Mg(2+) is required as a cofactor.

The protein resides in the cytoplasm. The catalysed reaction is IMP + L-aspartate + GTP = N(6)-(1,2-dicarboxyethyl)-AMP + GDP + phosphate + 2 H(+). It participates in purine metabolism; AMP biosynthesis via de novo pathway; AMP from IMP: step 1/2. Its function is as follows. Plays an important role in the de novo pathway of purine nucleotide biosynthesis. Catalyzes the first committed step in the biosynthesis of AMP from IMP. In Paracoccus denitrificans (strain Pd 1222), this protein is Adenylosuccinate synthetase.